We begin with the raw amino-acid sequence, 879 residues long: Prostaglandin F2 receptor negative regulator (879 aa).

The first 21 residues, 1-21, serve as a signal peptide directing secretion; sequence MGRPAPRPLLLALLSLAVCRG. Ig-like C2-type domains lie at 22–129 and 149–268; these read RVVR…ATVQ and PSSR…KAVE. Residues 22–832 are Extracellular-facing; sequence RVVRVPAGTL…MDVLNAFKYP (811 aa). Cystine bridges form between Cys43–Cys119 and Cys169–Cys247. N-linked (GlcNAc...) asparagine glycosylation is present at Asn44. Residues 89–91 carry the Cell attachment site motif; sequence RGD. At Thr271 the chain carries Phosphothreonine. 4 consecutive Ig-like C2-type domains span residues 276–389, 406–527, 544–662, and 688–813; these read PTAL…WHKV, PEYQ…RNSS, ASED…AWSP, and PIFN…AEIH. Cys299 and Cys373 are joined by a disulfide. N-linked (GlcNAc...) asparagine glycosylation is found at Asn300, Asn383, and Asn413. The Endoplasmic reticulum retention signal motif lies at 424 to 427; the sequence is PTEL. Cys429 and Cys515 form a disulfide bridge. Residues Asn525, Asn600, Asn618, and Asn691 are each glycosylated (N-linked (GlcNAc...) asparagine). Cys571 and Cys655 are disulfide-bonded. Positions 703–705 match the Cell attachment site motif; the sequence is RGD. A disulfide bond links Cys711 and Cys793. A helical membrane pass occupies residues 833–853; sequence LLIGVGLSTVIGLLSCLIGYC. At 854–879 the chain is on the cytoplasmic side; the sequence is SSHWCCKKEVRETRRERRRLMSMEMD.

Interacts with CD9 and CD81. Part of a complex composed of CD9, CD81 and IGSF8. Also seems to interact with CD63, CD82 and CD151. As to expression, reproductive tissues, lung and heart.

It is found in the endoplasmic reticulum membrane. Its subcellular location is the golgi apparatus. The protein localises to the trans-Golgi network membrane. In terms of biological role, inhibits the binding of prostaglandin F2-alpha (PGF2-alpha) to its specific FP receptor, by decreasing the receptor number rather than the affinity constant. Functional coupling with the prostaglandin F2-alpha receptor seems to occur. In myoblasts, associates with tetraspanins CD9 and CD81 to prevent myotube fusion during muscle regeneration. In Rattus norvegicus (Rat), this protein is Prostaglandin F2 receptor negative regulator (Ptgfrn).